The primary structure comprises 547 residues: Chaperonin GroEL (547 aa).

ATP-binding positions include 30–33 (TLGP), Lys-51, 87–91 (DGTTT), Gly-415, 480–482 (NAA), and Asp-496.

It belongs to the chaperonin (HSP60) family. Forms a cylinder of 14 subunits composed of two heptameric rings stacked back-to-back. Interacts with the co-chaperonin GroES.

The protein localises to the cytoplasm. The catalysed reaction is ATP + H2O + a folded polypeptide = ADP + phosphate + an unfolded polypeptide.. Functionally, together with its co-chaperonin GroES, plays an essential role in assisting protein folding. The GroEL-GroES system forms a nano-cage that allows encapsulation of the non-native substrate proteins and provides a physical environment optimized to promote and accelerate protein folding. This chain is Chaperonin GroEL, found in Glaesserella parasuis serovar 5 (strain SH0165) (Haemophilus parasuis).